The chain runs to 870 residues: Leucine--tRNA ligase (870 aa).

Positions 36-46 (PYPSGKIHLGH) match the 'HIGH' region motif. The 'KMSKS' region signature appears at 602 to 606 (KMSKS). Lysine 605 is a binding site for ATP.

Belongs to the class-I aminoacyl-tRNA synthetase family.

The protein localises to the cytoplasm. The enzyme catalyses tRNA(Leu) + L-leucine + ATP = L-leucyl-tRNA(Leu) + AMP + diphosphate. This is Leucine--tRNA ligase from Rickettsia akari (strain Hartford).